A 438-amino-acid polypeptide reads, in one-letter code: Zinc finger protein 641 (438 aa).

Positions 1–53 are disordered; the sequence is MQAEDRSQFGSAAEMLSEQTAALGTGWESMNVQLDGAEPQVERGSQEERPWRT. Positions 17 to 32 are enriched in polar residues; sequence SEQTAALGTGWESMNV. The span at 40-51 shows a compositional bias: basic and acidic residues; that stretch reads QVERGSQEERPW. The KRAB domain occupies 109 to 181; it reads VTIKDVSLCF…DPQDLEERDI (73 aa). Residues 171-265 are transactivation; it reads PDPQDLEERD…EMDSLLRPHT (95 aa). Ser191 is subject to Phosphoserine. C2H2-type zinc fingers lie at residues 264–286, 292–314, and 320–342; these read HTCP…QQTH, YSCL…QKTH, and SRCS…QRVH. Residues 345-367 are disordered; that stretch reads GKSCKGQEVGESPGTRKRQRAPP. C2H2-type zinc fingers lie at residues 372 to 394 and 400 to 422; these read HVCT…WLTH and FQCP…LLTH. The disordered stretch occupies residues 418 to 438; it reads HLLTHQGQSPRNSWDRGTSVF. Residues 422–438 are compositionally biased toward polar residues; the sequence is HQGQSPRNSWDRGTSVF. A Phosphoserine modification is found at Ser426.

Belongs to the krueppel C2H2-type zinc-finger protein family. In terms of tissue distribution, highly expressed in skeletal muscle, moderate expression in heart, liver, and pancreas, lower expression in placenta, no expression seen in brain, lung, and kidney.

The protein resides in the nucleus. Functionally, transcriptional activator. Activates transcriptional activities of SRE and AP-1. This chain is Zinc finger protein 641 (ZNF641), found in Homo sapiens (Human).